Reading from the N-terminus, the 149-residue chain is Calmodulin-like protein 3 (149 aa).

EF-hand domains lie at 8-43 (EQVT…LGQN), 44-79 (PTEA…KMKD), 81-116 (DNEE…LGEK), and 117-149 (LSDE…LVSK). 19 residues coordinate Ca(2+): Asp21, Asp23, Asp25, Cys27, Glu32, Asp57, Asp59, Asn61, Thr63, Glu68, Asp94, Asp96, Asn98, Glu105, Asp130, Asp132, Asp134, Gln136, and Glu141.

This sequence belongs to the calmodulin family. Interacts with MYO10, the interaction is calcium-dependent and essential for MYO10 function in filopodial extension. As to expression, expressed in normal mammary, prostate, cervical, and epidermal tissues. It is greatly reduced or undetectable in transformed cells.

Functionally, may function as a specific light chain of unconventional myosin-10 (MYO10), also enhances MYO10 translation, possibly by acting as a chaperone for the emerging MYO10 heavy chain protein. May compete with calmodulin by binding, with different affinities, to cellular substrates. The sequence is that of Calmodulin-like protein 3 (CALML3) from Homo sapiens (Human).